The chain runs to 485 residues: Cytosol non-specific dipeptidase (485 aa).

Position 76 (His-76) interacts with Zn(2+). Residue Asp-78 is part of the active site. Asp-115 lines the Zn(2+) pocket. Catalysis depends on Glu-145, which acts as the Proton acceptor. Residues Glu-146 and Asp-169 each contribute to the Zn(2+) site. N6-acetyllysine is present on Lys-296. Residue His-457 coordinates Zn(2+).

Belongs to the peptidase M20C family. Zn(2+) is required as a cofactor. Requires Co(2+) as cofactor.

It carries out the reaction Hydrolysis of dipeptides, preferentially hydrophobic dipeptides including prolyl amino acids.. With respect to regulation, inhibited by metal chelators. Its function is as follows. Dipeptidase with broad substrate specificity. Requires dipeptide substrates with an unblocked N-terminus and the amino group in the alpha or beta position. Non-protein amino acids and proline are not accepted in the C-terminal position, whereas some dipeptide amides and formyl amino acids are hydrolyzed. Also shows cysteinylglycinase activity, which is sufficient for E.coli to utilize cysteinylglycine as a cysteine source. This is Cytosol non-specific dipeptidase (pepD) from Escherichia coli (strain K12).